The following is a 193-amino-acid chain: Potassium-transporting ATPase KdpC subunit (193 aa).

A helical membrane pass occupies residues 14–34 (ITFTFLVLCGLVYPLIVTGIA).

It belongs to the KdpC family. In terms of assembly, the system is composed of three essential subunits: KdpA, KdpB and KdpC.

Its subcellular location is the cell membrane. Part of the high-affinity ATP-driven potassium transport (or Kdp) system, which catalyzes the hydrolysis of ATP coupled with the electrogenic transport of potassium into the cytoplasm. This subunit acts as a catalytic chaperone that increases the ATP-binding affinity of the ATP-hydrolyzing subunit KdpB by the formation of a transient KdpB/KdpC/ATP ternary complex. The protein is Potassium-transporting ATPase KdpC subunit of Bacillus cereus (strain Q1).